The chain runs to 303 residues: tRNA dimethylallyltransferase (303 aa).

Residue 11 to 18 (GPTGVGKS) participates in ATP binding. 13-18 (TGVGKS) provides a ligand contact to substrate. 2 interaction with substrate tRNA regions span residues 36-39 (DSRQ) and 159-163 (QRVLR).

The protein belongs to the IPP transferase family. As to quaternary structure, monomer. Mg(2+) is required as a cofactor.

The enzyme catalyses adenosine(37) in tRNA + dimethylallyl diphosphate = N(6)-dimethylallyladenosine(37) in tRNA + diphosphate. Catalyzes the transfer of a dimethylallyl group onto the adenine at position 37 in tRNAs that read codons beginning with uridine, leading to the formation of N6-(dimethylallyl)adenosine (i(6)A). The polypeptide is tRNA dimethylallyltransferase (Lawsonia intracellularis (strain PHE/MN1-00)).